A 35-amino-acid chain; its full sequence is Photosystem II reaction center protein T (35 aa).

A helical transmembrane segment spans residues 3–23 (ALVYTFLLVSTLGIIFFAIFF).

It belongs to the PsbT family. As to quaternary structure, PSII is composed of 1 copy each of membrane proteins PsbA, PsbB, PsbC, PsbD, PsbE, PsbF, PsbH, PsbI, PsbJ, PsbK, PsbL, PsbM, PsbT, PsbY, PsbZ, Psb30/Ycf12, at least 3 peripheral proteins of the oxygen-evolving complex and a large number of cofactors. It forms dimeric complexes.

The protein localises to the plastid. It is found in the chloroplast thylakoid membrane. In terms of biological role, found at the monomer-monomer interface of the photosystem II (PS II) dimer, plays a role in assembly and dimerization of PSII. PSII is a light-driven water plastoquinone oxidoreductase, using light energy to abstract electrons from H(2)O, generating a proton gradient subsequently used for ATP formation. The polypeptide is Photosystem II reaction center protein T (Cycas revoluta (Sago palm)).